Reading from the N-terminus, the 504-residue chain is Anaerobic nitric oxide reductase transcription regulator NorR (504 aa).

Asp-57 is subject to 4-aspartylphosphate. One can recognise a Sigma-54 factor interaction domain in the interval 187-416 (MIGLSPGMTQ…LEHAIHRAVV (230 aa)). ATP-binding positions include 215–222 (GETGTGKE) and 278–287 (ADNGTLFLDE). Positions 479 to 498 (WAACARMLETDVANLHRLAK) form a DNA-binding region, H-T-H motif.

It functions in the pathway nitrogen metabolism; nitric oxide reduction. Required for the expression of anaerobic nitric oxide (NO) reductase, acts as a transcriptional activator for at least the norVW operon. Activation also requires sigma-54. The sequence is that of Anaerobic nitric oxide reductase transcription regulator NorR from Escherichia coli (strain SE11).